Consider the following 456-residue polypeptide: Probable glycine dehydrogenase (decarboxylating) subunit 1 (456 aa).

Belongs to the GcvP family. N-terminal subunit subfamily. As to quaternary structure, the glycine cleavage system is composed of four proteins: P, T, L and H. In this organism, the P 'protein' is a heterodimer of two subunits.

The catalysed reaction is N(6)-[(R)-lipoyl]-L-lysyl-[glycine-cleavage complex H protein] + glycine + H(+) = N(6)-[(R)-S(8)-aminomethyldihydrolipoyl]-L-lysyl-[glycine-cleavage complex H protein] + CO2. Its function is as follows. The glycine cleavage system catalyzes the degradation of glycine. The P protein binds the alpha-amino group of glycine through its pyridoxal phosphate cofactor; CO(2) is released and the remaining methylamine moiety is then transferred to the lipoamide cofactor of the H protein. This Legionella pneumophila (strain Paris) protein is Probable glycine dehydrogenase (decarboxylating) subunit 1.